Here is a 744-residue protein sequence, read N- to C-terminus: Tripartite motif-containing protein 3 (744 aa).

Ala-2 is modified (N-acetylalanine). The interval 2 to 290 (AKREDSPGPE…LAAQAFPERP (289 aa)) is interaction with KIF21B. At Ser-7 the chain carries Phosphoserine. The segment at 22–63 (CSICLDRYRCPKVLPCLHTFCERCLQNYIPPQSLTLSCPVCR) adopts an RING-type zinc-finger fold. A B box-type zinc finger spans residues 110–151 (GRPLSCPNHEGKTMEFYCEACETAMCGECRAGEHREHGTVLL). Positions 115, 118, 138, and 143 each coordinate Zn(2+). Residues 153–224 (DVVEQHKAAL…RKQALVSDLE (72 aa)) adopt a coiled-coil conformation. A Filamin repeat occupies 317 to 418 (TTSATAHETV…VRGSPFRVRA (102 aa)). The tract at residues 419–464 (LRPGDLPPSPDDVKRRVKSPGGPGSHVRQKAVRRPSSMYSTGGKRK) is disordered. Phosphoserine is present on Ser-427. NHL repeat units follow at residues 473 to 516 (VFRV…FSNE), 520 to 563 (KFRF…FSPE), 564 to 605 (GKFK…FQPN), 609 to 652 (VGRF…YSAD), 656 to 699 (LFKF…FDSS), and 700 to 743 (GSFL…YRYL).

The protein belongs to the TRIM/RBCC family. Forms homooligomers. Interacts with TRIM2; this interaction reduces TRIM2 activity. Associates with myosin-Vb (MYO5B) and alpha-actinin-4 (ACTN4). Component of the CART complex, at least composed of ACTN4, HGS/HRS, MYO5B and TRIM3. Interacts with ZFYVE28/LST2. Interacts with KIF21B.

Its subcellular location is the cytoplasm. The protein localises to the early endosome. The protein resides in the golgi apparatus. It is found in the trans-Golgi network. It localises to the cell projection. Its subcellular location is the dendrite. It carries out the reaction S-ubiquitinyl-[E2 ubiquitin-conjugating enzyme]-L-cysteine + [acceptor protein]-L-lysine = [E2 ubiquitin-conjugating enzyme]-L-cysteine + N(6)-ubiquitinyl-[acceptor protein]-L-lysine.. In terms of biological role, E3 ubiquitin ligase that plays essential roles in neuronal functions such as regulation of neuronal plasticity, learning, and memory. In addition to its neuronal functions, participates in other biological processes such as innate immunity or cell cycle regulation. Component of the cytoskeleton-associated recycling or transport complex in neurons, polyubiquitinates gamma-actin, thus regulating neuronal plasticity, learning, and memory. Ubiquitinates postsynaptic scaffold GKAP, a neuronal substrate involved in synaptic remodeling and thereby modulates dendritic spine morphology. Positively regulates motility of microtubule-dependent motor protein KIF21B. Induces growth arrest via its RING-dependent E3 ligase activity and ubiquinates CDKN1A. Positively regulates TLR3-mediated signaling by mediating 'Lys-63'-linked polyubiquitination of TLR3. In turn, promotes the recognition and sorting of polyubiquitinated TLR3 by the ESCRT complexes. The chain is Tripartite motif-containing protein 3 (Trim3) from Mus musculus (Mouse).